We begin with the raw amino-acid sequence, 31 residues long: Cytochrome b6-f complex subunit 6 (31 aa).

Residues Ile-5–Leu-25 form a helical membrane-spanning segment.

This sequence belongs to the PetL family. The 4 large subunits of the cytochrome b6-f complex are cytochrome b6, subunit IV (17 kDa polypeptide, PetD), cytochrome f and the Rieske protein, while the 4 small subunits are PetG, PetL, PetM and PetN. The complex functions as a dimer.

The protein localises to the plastid. It is found in the chloroplast thylakoid membrane. Functionally, component of the cytochrome b6-f complex, which mediates electron transfer between photosystem II (PSII) and photosystem I (PSI), cyclic electron flow around PSI, and state transitions. PetL is important for photoautotrophic growth as well as for electron transfer efficiency and stability of the cytochrome b6-f complex. The chain is Cytochrome b6-f complex subunit 6 from Chlorokybus atmophyticus (Soil alga).